Consider the following 447-residue polypeptide: Serine/threonine-protein phosphatase 2A 55 kDa regulatory subunit B gamma isoform (447 aa).

WD repeat units lie at residues 22–61 (TEAD…KNAP), 87–128 (EIEE…KRPE), 171–209 (GHTY…RSFN), 220–260 (DLTE…LCDK), 279–317 (EIIS…RPIE), 334–375 (ESDC…DVTL), and 410–446 (DFTK…NSDM).

This sequence belongs to the phosphatase 2A regulatory subunit B family. PP2A consists of a common heterodimeric core enzyme, composed of a 36 kDa catalytic subunit (subunit C) and a 65 kDa constant regulatory subunit (PR65 or subunit A), that associates with a variety of regulatory subunits. Proteins that associate with the core dimer include three families of regulatory subunits B (the R2/B/PR55/B55, R3/B''/PR72/PR130/PR59 and R5/B'/B56 families), the 48 kDa variable regulatory subunit, viral proteins, and cell signaling molecules. Interacts with IER5.

In terms of biological role, the B regulatory subunit might modulate substrate selectivity and catalytic activity, and might also direct the localization of the catalytic enzyme to a particular subcellular compartment. This chain is Serine/threonine-protein phosphatase 2A 55 kDa regulatory subunit B gamma isoform (Ppp2r2c), found in Mus musculus (Mouse).